A 605-amino-acid polypeptide reads, in one-letter code: Exo-beta-1,3-glucanase (605 aa).

The segment at 1 to 23 (MHVPPTDPARSAPPASPHRRRRP) is disordered. Residues 1–44 (MHVPPTDPARSAPPASPHRRRRPKALGLTALAAAMLMAVPTTQA) form the signal peptide. Substrate is bound by residues glutamine 174, 194 to 196 (YGW), glutamine 217, 446 to 449 (WRAD), and 480 to 481 (EH). The active-site Proton donor is the glutamate 502. Tyrosine 505 is a substrate binding site.

It belongs to the glycosyl hydrolase 55 family.

It localises to the secreted. The enzyme catalyses Successive hydrolysis of beta-D-glucose units from the non-reducing ends of (1-&gt;3)-beta-D-glucans, releasing alpha-glucose.. Functionally, exo-beta-1,3-glucanase that specifically hydrolyzes laminarin and laminarioligosaccharides, producing glucose and laminaribiose as end products. The chain is Exo-beta-1,3-glucanase from Streptomyces sp. (strain SirexAA-E / ActE).